The chain runs to 397 residues: Argininosuccinate synthase (397 aa).

9-17 (AYSGGLDTT) provides a ligand contact to ATP. Residue tyrosine 87 coordinates L-citrulline. Glycine 117 is an ATP binding site. L-aspartate contacts are provided by threonine 119, asparagine 123, and aspartate 124. Asparagine 123 is an L-citrulline binding site. 5 residues coordinate L-citrulline: arginine 127, serine 174, serine 183, glutamate 259, and tyrosine 271.

This sequence belongs to the argininosuccinate synthase family. Type 1 subfamily. As to quaternary structure, homotetramer.

The protein resides in the cytoplasm. It catalyses the reaction L-citrulline + L-aspartate + ATP = 2-(N(omega)-L-arginino)succinate + AMP + diphosphate + H(+). The protein operates within amino-acid biosynthesis; L-arginine biosynthesis; L-arginine from L-ornithine and carbamoyl phosphate: step 2/3. This is Argininosuccinate synthase from Pyrobaculum aerophilum (strain ATCC 51768 / DSM 7523 / JCM 9630 / CIP 104966 / NBRC 100827 / IM2).